The sequence spans 875 residues: Probable inorganic carbon transporter subunit DabA (875 aa).

Zn(2+)-binding residues include cysteine 399, aspartate 401, histidine 581, and cysteine 596.

This sequence belongs to the inorganic carbon transporter (TC 9.A.2) DabA family. In terms of assembly, forms a complex with DabB. The cofactor is Zn(2+).

The protein localises to the cell membrane. Functionally, part of an energy-coupled inorganic carbon pump. The protein is Probable inorganic carbon transporter subunit DabA of Bacillus thuringiensis (strain Al Hakam).